The following is a 221-amino-acid chain: MDSSSKPMNGSAGGSPVGDERKMGDHEHEFRISIILLRSFLLVLVIISEALMVTDRETGSVPLPFFGLPRPVFVTKTAKYELVTGLKFYVDALGVVIGYTVLHLLFNIGLVATKGTVVDCKSVAWISFIADSMMGYLLLSSAAVATEIGYLAEEGAPAVLWRKVCNAFGYFCTVYAISVVICFIAALVSFVVVGISAYHLFRLYGIQQQAAREKEKLSAEM.

The disordered stretch occupies residues Met1–Lys22. Topologically, residues Met1–Arg31 are cytoplasmic. Residues Ile32 to Met52 form a helical membrane-spanning segment. The Extracellular segment spans residues Val53 to Asp91. A helical transmembrane segment spans residues Ala92–Ala112. Residues Thr113 to Ser122 lie on the Cytoplasmic side of the membrane. A helical membrane pass occupies residues Val123–Ala143. At Val144–Val174 the chain is on the extracellular side. The chain crosses the membrane as a helical span at residues Tyr175–Ile195. Over Ser196–Met221 the chain is Cytoplasmic.

This sequence belongs to the Casparian strip membrane proteins (CASP) family. Homodimer and heterodimers.

The protein resides in the cell membrane. This is CASP-like protein 2U10 from Selaginella moellendorffii (Spikemoss).